Consider the following 174-residue polypeptide: MDINVVNALAYEDFVKLFGNVVEKCPLISAAIWSYRPFKDLADIEARISEFIHSLPDSGKEGILRCHPDLAGRDLQSGTLTPESQEEQSQAGMTTLDSAEIVHMYRLNSEYKERFGFPFVICARLNNKADIVRQLSERLKNRRTAELECAIEEVKKICSLRLHSIVLSDIQTKL.

H67 acts as the Proton donor in catalysis. Substrate-binding positions include P68, 84–88, and 119–123; these read SQEEQ and FVICA. The Microbody targeting signal motif lies at 172–174; it reads TKL.

It belongs to the OHCU decarboxylase family. In terms of assembly, homodimer.

The protein resides in the peroxisome. It carries out the reaction 5-hydroxy-2-oxo-4-ureido-2,5-dihydro-1H-imidazole-5-carboxylate + H(+) = (S)-allantoin + CO2. It functions in the pathway purine metabolism; urate degradation; (S)-allantoin from urate: step 3/3. Catalyzes the stereoselective decarboxylation of 2-oxo-4-hydroxy-4-carboxy-5-ureidoimidazoline (OHCU) to (S)-allantoin. This chain is 2-oxo-4-hydroxy-4-carboxy-5-ureidoimidazoline decarboxylase (urad), found in Danio rerio (Zebrafish).